Consider the following 1233-residue polypeptide: uncharacterized protein (1233 aa).

Disordered stretches follow at residues 32–51 (SETS…TPKP), 510–529 (ATTN…PVPD), and 882–915 (EVIE…IERS). 2 stretches are compositionally biased toward acidic residues: residues 513–529 (NEEE…PVPD) and 882–905 (EVIE…EDEG). Positions 906-915 (DNKQRVIERS) are enriched in basic and acidic residues.

This is an uncharacterized protein from Dictyostelium discoideum (Social amoeba).